Here is a 64-residue protein sequence, read N- to C-terminus: Prokaryotic ubiquitin-like protein Pup (64 aa).

A disordered region spans residues 1 to 32 (MNAKQTQIMGGGGRDEDNAEDSAQASGQVQIN). Residues 20-58 (EDSAQASGQVQINTEGVDSLLDEIDGLLENNAEEFVRSY) are ARC ATPase binding. Polar residues predominate over residues 21–32 (DSAQASGQVQIN). Glu-64 participates in a covalent cross-link: Isoglutamyl lysine isopeptide (Glu-Lys) (interchain with K-? in acceptor proteins).

This sequence belongs to the prokaryotic ubiquitin-like protein family. Strongly interacts with the proteasome-associated ATPase ARC through a hydrophobic interface; the interacting region of Pup lies in its C-terminal half. There is one Pup binding site per ARC hexamer ring.

The protein operates within protein degradation; proteasomal Pup-dependent pathway. Functionally, protein modifier that is covalently attached to lysine residues of substrate proteins, thereby targeting them for proteasomal degradation. The tagging system is termed pupylation. This Corynebacterium glutamicum (strain R) protein is Prokaryotic ubiquitin-like protein Pup.